The primary structure comprises 396 residues: Acetate kinase (396 aa).

Asn8 serves as a coordination point for Mg(2+). Lys15 contributes to the ATP binding site. Position 89 (Arg89) interacts with substrate. The active-site Proton donor/acceptor is Asp146. ATP-binding positions include 206–210 (HIGNG), 283–285 (DMR), and 331–335 (GVGEN). Glu383 lines the Mg(2+) pocket.

The protein belongs to the acetokinase family. Homodimer. Mg(2+) is required as a cofactor. The cofactor is Mn(2+).

The protein localises to the cytoplasm. The enzyme catalyses acetate + ATP = acetyl phosphate + ADP. It functions in the pathway metabolic intermediate biosynthesis; acetyl-CoA biosynthesis; acetyl-CoA from acetate: step 1/2. Functionally, catalyzes the formation of acetyl phosphate from acetate and ATP. Can also catalyze the reverse reaction. In Streptococcus pneumoniae (strain JJA), this protein is Acetate kinase.